The sequence spans 439 residues: Tol-Pal system protein TolB (439 aa).

The signal sequence occupies residues 1 to 22 (MKKPLRWLAALTALLLPLSALA).

Belongs to the TolB family. In terms of assembly, the Tol-Pal system is composed of five core proteins: the inner membrane proteins TolA, TolQ and TolR, the periplasmic protein TolB and the outer membrane protein Pal. They form a network linking the inner and outer membranes and the peptidoglycan layer.

The protein localises to the periplasm. Functionally, part of the Tol-Pal system, which plays a role in outer membrane invagination during cell division and is important for maintaining outer membrane integrity. This Xanthomonas axonopodis pv. citri (strain 306) protein is Tol-Pal system protein TolB.